A 179-amino-acid chain; its full sequence is Acireductone dioxygenase (179 aa).

Positions 88, 90, 94, and 133 each coordinate Fe(2+). Ni(2+)-binding residues include histidine 88, histidine 90, glutamate 94, and histidine 133.

The protein belongs to the acireductone dioxygenase (ARD) family. In terms of assembly, monomer. Interacts with MMP14. The cofactor is Fe(2+). Ni(2+) serves as cofactor.

It is found in the cytoplasm. The protein localises to the nucleus. It localises to the cell membrane. The catalysed reaction is 1,2-dihydroxy-5-(methylsulfanyl)pent-1-en-3-one + O2 = 4-methylsulfanyl-2-oxobutanoate + formate + 2 H(+). It catalyses the reaction 1,2-dihydroxy-5-(methylsulfanyl)pent-1-en-3-one + O2 = 3-(methylsulfanyl)propanoate + CO + formate + 2 H(+). It participates in amino-acid biosynthesis; L-methionine biosynthesis via salvage pathway; L-methionine from S-methyl-5-thio-alpha-D-ribose 1-phosphate: step 5/6. Catalyzes 2 different reactions between oxygen and the acireductone 1,2-dihydroxy-3-keto-5-methylthiopentene (DHK-MTPene) depending upon the metal bound in the active site. Fe-containing acireductone dioxygenase (Fe-ARD) produces formate and 2-keto-4-methylthiobutyrate (KMTB), the alpha-ketoacid precursor of methionine in the methionine recycle pathway. Ni-containing acireductone dioxygenase (Ni-ARD) produces methylthiopropionate, carbon monoxide and formate, and does not lie on the methionine recycle pathway. The sequence is that of Acireductone dioxygenase (adi1) from Xenopus laevis (African clawed frog).